Reading from the N-terminus, the 169-residue chain is MRVSVFAVGRMKSGPERELVERYFDRFAKAGPPLGLEFAGVSEIPESRGQTAQLRKAEEAQRIHEALDNAKSGGTSSGGAALILLDERGKTLGSEAFAAIVGRMRDDGKRQLIVAIGGPDGHDPALRSRADLVLALGELTWPHQIARILIAEQLYRAATILAGHPYHRS.

S-adenosyl-L-methionine is bound by residues L85, G117, and 136-141; that span reads LGELTW.

The protein belongs to the RNA methyltransferase RlmH family. Homodimer.

It is found in the cytoplasm. It carries out the reaction pseudouridine(1915) in 23S rRNA + S-adenosyl-L-methionine = N(3)-methylpseudouridine(1915) in 23S rRNA + S-adenosyl-L-homocysteine + H(+). Specifically methylates the pseudouridine at position 1915 (m3Psi1915) in 23S rRNA. The sequence is that of Ribosomal RNA large subunit methyltransferase H from Brucella abortus biovar 1 (strain 9-941).